The sequence spans 364 residues: Aminomethyltransferase (364 aa).

Belongs to the GcvT family. As to quaternary structure, the glycine cleavage system is composed of four proteins: P, T, L and H.

The catalysed reaction is N(6)-[(R)-S(8)-aminomethyldihydrolipoyl]-L-lysyl-[protein] + (6S)-5,6,7,8-tetrahydrofolate = N(6)-[(R)-dihydrolipoyl]-L-lysyl-[protein] + (6R)-5,10-methylene-5,6,7,8-tetrahydrofolate + NH4(+). In terms of biological role, the glycine cleavage system catalyzes the degradation of glycine. This Shigella boydii serotype 18 (strain CDC 3083-94 / BS512) protein is Aminomethyltransferase.